The chain runs to 128 residues: Lymphocyte antigen 6D (128 aa).

A signal peptide spans 1 to 20 (MRTALLLLAALAVATGPALT). The 88-residue stretch at 21-108 (LRCHVCTSSS…AAPTRTALAH (88 aa)) folds into the UPAR/Ly6 domain. Cystine bridges form between C23–C45, C26–C32, C38–C63, C67–C86, and C87–C92. N98 carries GPI-anchor amidated asparagine lipidation. A propeptide spans 99–128 (AAPTRTALAHSALSLGLALSLLAVILAPSL) (removed in mature form).

As to expression, expressed exclusively at the outer cell surface of transitional epithelia and the keratinocyte of stratified squamous epithelia.

The protein localises to the cell membrane. In terms of biological role, may act as a specification marker at earliest stage specification of lymphocytes between B- and T-cell development. Marks the earliest stage of B-cell specification. In Homo sapiens (Human), this protein is Lymphocyte antigen 6D (LY6D).